The chain runs to 360 residues: Phenylalanine--tRNA ligase alpha subunit (360 aa).

Glu260 contacts Mg(2+).

Belongs to the class-II aminoacyl-tRNA synthetase family. Phe-tRNA synthetase alpha subunit type 1 subfamily. In terms of assembly, tetramer of two alpha and two beta subunits. Mg(2+) serves as cofactor.

It is found in the cytoplasm. The enzyme catalyses tRNA(Phe) + L-phenylalanine + ATP = L-phenylalanyl-tRNA(Phe) + AMP + diphosphate + H(+). The sequence is that of Phenylalanine--tRNA ligase alpha subunit from Afipia carboxidovorans (strain ATCC 49405 / DSM 1227 / KCTC 32145 / OM5) (Oligotropha carboxidovorans).